The following is a 350-amino-acid chain: Nicotinate-nucleotide--dimethylbenzimidazole phosphoribosyltransferase (350 aa).

Catalysis depends on glutamate 317, which acts as the Proton acceptor.

Belongs to the CobT family.

It carries out the reaction 5,6-dimethylbenzimidazole + nicotinate beta-D-ribonucleotide = alpha-ribazole 5'-phosphate + nicotinate + H(+). The protein operates within nucleoside biosynthesis; alpha-ribazole biosynthesis; alpha-ribazole from 5,6-dimethylbenzimidazole: step 1/2. In terms of biological role, catalyzes the synthesis of alpha-ribazole-5'-phosphate from nicotinate mononucleotide (NAMN) and 5,6-dimethylbenzimidazole (DMB). In Shewanella oneidensis (strain ATCC 700550 / JCM 31522 / CIP 106686 / LMG 19005 / NCIMB 14063 / MR-1), this protein is Nicotinate-nucleotide--dimethylbenzimidazole phosphoribosyltransferase.